A 447-amino-acid chain; its full sequence is Alkylglycerol monooxygenase (447 aa).

The next 2 helical transmembrane spans lie at 43 to 63 and 111 to 131; these read ATPF…ILKG and WDST…YYWF. One can recognise a Fatty acid hydroxylase domain in the interval 119 to 249; the sequence is FTFLGVDFGY…LIIWDRIFGT (131 aa). Positions 132-136 match the Histidine box-1 motif; sequence HRMAH. The Histidine box-2 motif lies at 145-149; it reads HQAHH. A helical membrane pass occupies residues 170-190; sequence SWVFYCPLALFIPPSVFAVHI. The short motif at 221-225 is the Histidine box-3 element; the sequence is HRVHH. A run of 3 helical transmembrane segments spans residues 340–360, 363–383, and 413–433; these read VLQF…TAVL, VTLL…GFLL, and IPSL…FWGV.

Belongs to the sterol desaturase family. TMEM195 subfamily. Requires Fe cation as cofactor. Highly expressed in lever and small intestine.

It is found in the endoplasmic reticulum membrane. It carries out the reaction 1-O-(1,2-saturated-alkyl)-sn-glycerol + (6R)-L-erythro-5,6,7,8-tetrahydrobiopterin + O2 = a 1-(1-hydroxyalkyl)-sn-glycerol + (6R)-L-erythro-6,7-dihydrobiopterin + H2O. Glyceryl-ether monooxygenase that cleaves the O-alkyl bond of ether lipids. Ether lipids are essential components of brain membranes. This is Alkylglycerol monooxygenase (Agmo) from Mus musculus (Mouse).